Reading from the N-terminus, the 427-residue chain is 3-phosphoshikimate 1-carboxyvinyltransferase (427 aa).

Residues lysine 22, serine 23, and arginine 27 each coordinate 3-phosphoshikimate. Phosphoenolpyruvate is bound at residue lysine 22. Residues glycine 96 and arginine 124 each contribute to the phosphoenolpyruvate site. The 3-phosphoshikimate site is built by serine 169, serine 170, glutamine 171, serine 197, aspartate 313, asparagine 336, and lysine 340. Glutamine 171 serves as a coordination point for phosphoenolpyruvate. Residue aspartate 313 is the Proton acceptor of the active site. Phosphoenolpyruvate contacts are provided by arginine 344, arginine 386, and lysine 411.

Belongs to the EPSP synthase family. As to quaternary structure, monomer.

It is found in the cytoplasm. It catalyses the reaction 3-phosphoshikimate + phosphoenolpyruvate = 5-O-(1-carboxyvinyl)-3-phosphoshikimate + phosphate. It participates in metabolic intermediate biosynthesis; chorismate biosynthesis; chorismate from D-erythrose 4-phosphate and phosphoenolpyruvate: step 6/7. Its function is as follows. Catalyzes the transfer of the enolpyruvyl moiety of phosphoenolpyruvate (PEP) to the 5-hydroxyl of shikimate-3-phosphate (S3P) to produce enolpyruvyl shikimate-3-phosphate and inorganic phosphate. The sequence is that of 3-phosphoshikimate 1-carboxyvinyltransferase from Salmonella newport (strain SL254).